Reading from the N-terminus, the 614-residue chain is uncharacterized protein (614 aa).

The next 2 membrane-spanning stretches (helical) occupy residues 494 to 516 (VAYWSFGALCIAVPIALILGSTL) and 552 to 574 (LLIGTGVAVGVAVILSINFIVHA). The interval 588-614 (AVRPRADKDIQTLTHRDEAEEDQEEDS) is disordered. The span at 591 to 605 (PRADKDIQTLTHRDE) shows a compositional bias: basic and acidic residues.

It is found in the cell membrane. This is an uncharacterized protein from Treponema pallidum (strain Nichols).